Reading from the N-terminus, the 375-residue chain is Succinyl-diaminopimelate desuccinylase (375 aa).

H66 contributes to the Zn(2+) binding site. D68 is a catalytic residue. Position 99 (D99) interacts with Zn(2+). E133 (proton acceptor) is an active-site residue. Positions 134, 162, and 348 each coordinate Zn(2+).

It belongs to the peptidase M20A family. DapE subfamily. Homodimer. It depends on Zn(2+) as a cofactor. The cofactor is Co(2+).

It catalyses the reaction N-succinyl-(2S,6S)-2,6-diaminopimelate + H2O = (2S,6S)-2,6-diaminopimelate + succinate. It functions in the pathway amino-acid biosynthesis; L-lysine biosynthesis via DAP pathway; LL-2,6-diaminopimelate from (S)-tetrahydrodipicolinate (succinylase route): step 3/3. Catalyzes the hydrolysis of N-succinyl-L,L-diaminopimelic acid (SDAP), forming succinate and LL-2,6-diaminopimelate (DAP), an intermediate involved in the bacterial biosynthesis of lysine and meso-diaminopimelic acid, an essential component of bacterial cell walls. The sequence is that of Succinyl-diaminopimelate desuccinylase from Buchnera aphidicola subsp. Acyrthosiphon pisum (strain 5A).